Reading from the N-terminus, the 158-residue chain is Cyclic pyranopterin monophosphate synthase (158 aa).

Residues 73-75 and 110-111 contribute to the substrate site; these read LCH and ME. Residue D125 is part of the active site.

It belongs to the MoaC family. In terms of assembly, homohexamer; trimer of dimers.

The catalysed reaction is (8S)-3',8-cyclo-7,8-dihydroguanosine 5'-triphosphate = cyclic pyranopterin phosphate + diphosphate. The protein operates within cofactor biosynthesis; molybdopterin biosynthesis. Catalyzes the conversion of (8S)-3',8-cyclo-7,8-dihydroguanosine 5'-triphosphate to cyclic pyranopterin monophosphate (cPMP). The protein is Cyclic pyranopterin monophosphate synthase of Azotobacter vinelandii (strain DJ / ATCC BAA-1303).